Here is a 201-residue protein sequence, read N- to C-terminus: FMN-dependent NADH:quinone oxidoreductase (201 aa).

FMN is bound by residues Ser10, 16 to 18 (SQS), 96 to 99 (MYNF), and 140 to 143 (SRGG).

It belongs to the azoreductase type 1 family. In terms of assembly, homodimer. The cofactor is FMN.

The enzyme catalyses 2 a quinone + NADH + H(+) = 2 a 1,4-benzosemiquinone + NAD(+). It catalyses the reaction N,N-dimethyl-1,4-phenylenediamine + anthranilate + 2 NAD(+) = 2-(4-dimethylaminophenyl)diazenylbenzoate + 2 NADH + 2 H(+). Functionally, quinone reductase that provides resistance to thiol-specific stress caused by electrophilic quinones. In terms of biological role, also exhibits azoreductase activity. Catalyzes the reductive cleavage of the azo bond in aromatic azo compounds to the corresponding amines. This chain is FMN-dependent NADH:quinone oxidoreductase, found in Escherichia coli O6:H1 (strain CFT073 / ATCC 700928 / UPEC).